The chain runs to 189 residues: Phosphoheptose isomerase (189 aa).

The 157-residue stretch at 33–189 (CTDTLKAGNK…ELVEREIYGG (157 aa)) folds into the SIS domain. Substrate is bound at residue 48 to 50 (NGG). Residues histidine 57 and glutamate 61 each contribute to the Zn(2+) site. Substrate contacts are provided by residues glutamate 61, 90–91 (ND), 116–118 (STS), serine 121, and glutamine 168. Zn(2+) is bound by residues glutamine 168 and histidine 176.

This sequence belongs to the SIS family. GmhA subfamily. The cofactor is Zn(2+).

The protein resides in the cytoplasm. The enzyme catalyses 2 D-sedoheptulose 7-phosphate = D-glycero-alpha-D-manno-heptose 7-phosphate + D-glycero-beta-D-manno-heptose 7-phosphate. Its pathway is carbohydrate biosynthesis; D-glycero-D-manno-heptose 7-phosphate biosynthesis; D-glycero-alpha-D-manno-heptose 7-phosphate and D-glycero-beta-D-manno-heptose 7-phosphate from sedoheptulose 7-phosphate: step 1/1. Catalyzes the isomerization of sedoheptulose 7-phosphate in D-glycero-D-manno-heptose 7-phosphate. The chain is Phosphoheptose isomerase from Akkermansia muciniphila (strain ATCC BAA-835 / DSM 22959 / JCM 33894 / BCRC 81048 / CCUG 64013 / CIP 107961 / Muc).